The primary structure comprises 129 residues: uncharacterized protein (129 aa).

This is an uncharacterized protein from Methanocaldococcus jannaschii (strain ATCC 43067 / DSM 2661 / JAL-1 / JCM 10045 / NBRC 100440) (Methanococcus jannaschii).